Reading from the N-terminus, the 705-residue chain is Dynein axonemal intermediate chain 1 (705 aa).

2 disordered regions span residues 1-44 (MPSK…AVRP) and 122-169 (AGSQ…DVPA). A phosphoserine mark is found at Ser-124 and Ser-127. Over residues 124–135 (SQESVKVVTSDT) the composition is skewed to polar residues. Residues 136–159 (EILEEEEEPKEGEGEGEGEAEGEA) show a composition bias toward acidic residues. WD repeat units follow at residues 386–426 (SSES…SQPC), 435–478 (KHTD…LVHI), 543–583 (AHNM…PMFI), 585–625 (DLNA…YEAI), and 633–672 (KKKN…RKMP).

It belongs to the dynein intermediate chain family. In terms of assembly, consists of at least two heavy chains and a number of intermediate and light chains. Interacts with BICD2. Interacts with CFAP45 and CFAP52. Interacts with CFAP53.

The protein resides in the cytoplasm. The protein localises to the cytoskeleton. It is found in the cilium axoneme. In terms of biological role, part of the dynein complex of respiratory cilia. The protein is Dynein axonemal intermediate chain 1 (Dnai1) of Rattus norvegicus (Rat).